We begin with the raw amino-acid sequence, 2837 residues long: Bifunctional DNA-directed RNA polymerase subunit beta-beta' (2837 aa).

Residues 1-1433 (MVDSSYMYAS…CLNVDLKQND (1433 aa)) are DNA-directed RNA polymerase subunit beta. The interval 1436 to 2837 (IEDISHTNIA…ESVVAYDQSN (1402 aa)) is DNA-directed RNA polymerase subunit beta'. 4 residues coordinate Zn(2+): cysteine 1501, cysteine 1503, cysteine 1516, and cysteine 1519. Mg(2+)-binding residues include aspartate 1893, aspartate 1895, and aspartate 1897. 4 residues coordinate Zn(2+): cysteine 2235, cysteine 2309, cysteine 2316, and cysteine 2319.

It in the N-terminal section; belongs to the RNA polymerase beta chain family. The protein in the C-terminal section; belongs to the RNA polymerase beta' chain family. As to quaternary structure, the RNAP catalytic core consists of 2 alpha, 1 beta/beta' and 1 omega subunit. When a sigma factor is associated with the core the holoenzyme is formed, which can initiate transcription. The cofactor is Mg(2+). It depends on Zn(2+) as a cofactor.

The catalysed reaction is RNA(n) + a ribonucleoside 5'-triphosphate = RNA(n+1) + diphosphate. In terms of biological role, DNA-dependent RNA polymerase catalyzes the transcription of DNA into RNA using the four ribonucleoside triphosphates as substrates. This chain is Bifunctional DNA-directed RNA polymerase subunit beta-beta' (rpoBC), found in Wolbachia pipientis wMel.